Consider the following 606-residue polypeptide: NADH-ubiquinone oxidoreductase chain 5 (606 aa).

The next 15 membrane-spanning stretches (helical) occupy residues 3-23 (VINLIPTLTLTSLIILTLPIT), 38-58 (ITKMAVTCAFAISLIPTLLFL), 87-107 (FFSLTFMPIALFITWSIMEFS), 124-144 (LLLFLITMLILVSANNLLQLF), 180-200 (IGDMGFIMMMAWFIIHLNSWE), 216-236 (LLGLLLASAGKSAQFGLHPWL), 244-264 (TPVSALLHSSTMVMAGVFTLI), 276-296 (IQTSTLCLGAITTLFTAICAL), 304-323 (IIALSTSSQLGLMMVTIGIN), 328-350 (AFTHMCTHAFFKAMLFLSSGSII), 369-389 (MPITSTAIIIGSLALTGMPFL), 404-424 (MSYINTWALLITLIAVSMTAS), 460-480 (LILGSIFMGFFISMNTIPHTT), 483-503 (MTMPPHLKFMALAVTLLGFTV), and 586-606 (LMKLYFLSFLLSITLGLLITL).

Belongs to the complex I subunit 5 family. As to quaternary structure, core subunit of respiratory chain NADH dehydrogenase (Complex I) which is composed of 45 different subunits.

It localises to the mitochondrion inner membrane. It carries out the reaction a ubiquinone + NADH + 5 H(+)(in) = a ubiquinol + NAD(+) + 4 H(+)(out). In terms of biological role, core subunit of the mitochondrial membrane respiratory chain NADH dehydrogenase (Complex I) which catalyzes electron transfer from NADH through the respiratory chain, using ubiquinone as an electron acceptor. Essential for the catalytic activity and assembly of complex I. This chain is NADH-ubiquinone oxidoreductase chain 5 (MT-ND5), found in Elephas maximus (Indian elephant).